We begin with the raw amino-acid sequence, 165 residues long: Immunity protein YokJ (165 aa).

Probably interacts with cognate toxin YokI but not with other non-cognate toxins. The interaction inhibits the toxic activity of YokI.

Its subcellular location is the cytoplasm. Its function is as follows. Immunity component of one of 6 LXG toxin-immunity modules in this strain. They promote kin selection, mediate competition in biofilms, and drive spatial segregation of different strains, indicating that LXG toxins may help avoid warfare between strains in biofilms. Mediates intercellular competition during biofilm formation; disruption of the operon disadvantages the bacteria, but overexpression of the cognate immunity protein restores growth in competition with wild-type. In situ neutralizes the toxic effect of cognate toxin YokI. Neutralizes the ability to inhibit growth of cognate toxin YokI upon expression in E.coli. Does not have immunity protein activity on other LXG toxins. This is Immunity protein YokJ (yokJ) from Bacillus subtilis (strain 168).